The chain runs to 237 residues: Ribonuclease PH (237 aa).

Residues R86 and 124-126 (GTR) each bind phosphate.

It belongs to the RNase PH family. In terms of assembly, homohexameric ring arranged as a trimer of dimers.

The enzyme catalyses tRNA(n+1) + phosphate = tRNA(n) + a ribonucleoside 5'-diphosphate. Phosphorolytic 3'-5' exoribonuclease that plays an important role in tRNA 3'-end maturation. Removes nucleotide residues following the 3'-CCA terminus of tRNAs; can also add nucleotides to the ends of RNA molecules by using nucleoside diphosphates as substrates, but this may not be physiologically important. Probably plays a role in initiation of 16S rRNA degradation (leading to ribosome degradation) during starvation. The polypeptide is Ribonuclease PH (Pseudoalteromonas translucida (strain TAC 125)).